The sequence spans 272 residues: MSVAKKEYKRITVKSLVDMKSNGEKISMLTAYDFTMAQIVDGAGIDVILVGDSASNVMAGHETTLPITLDQMIYHATSVVRAITRSLVVVDLPFGSYQSDPKEALRSAIRIMKESGGHAVKLEGGKEVKESIKRIIHAGIPVMGHLGLTPQSIYKFGTYTVRAKEEQEAEKLKSDAKLLEKMGCFAIVLEKVPAELAKEVAESITIPVIGIGAGNGVDGQVLVVHDMLGMTHEFNPRFLRRYADLHGEMTKAFQNYRDDVKSRKFPSDDEQY.

Residues aspartate 52 and aspartate 91 each coordinate Mg(2+). 3-methyl-2-oxobutanoate contacts are provided by residues 52 to 53 (DS), aspartate 91, and lysine 121. Mg(2+) is bound at residue glutamate 123. Glutamate 190 functions as the Proton acceptor in the catalytic mechanism.

It belongs to the PanB family. As to quaternary structure, homodecamer; pentamer of dimers. Mg(2+) is required as a cofactor.

Its subcellular location is the cytoplasm. The enzyme catalyses 3-methyl-2-oxobutanoate + (6R)-5,10-methylene-5,6,7,8-tetrahydrofolate + H2O = 2-dehydropantoate + (6S)-5,6,7,8-tetrahydrofolate. It participates in cofactor biosynthesis; (R)-pantothenate biosynthesis; (R)-pantoate from 3-methyl-2-oxobutanoate: step 1/2. Its function is as follows. Catalyzes the reversible reaction in which hydroxymethyl group from 5,10-methylenetetrahydrofolate is transferred onto alpha-ketoisovalerate to form ketopantoate. The protein is 3-methyl-2-oxobutanoate hydroxymethyltransferase of Christiangramia forsetii (strain DSM 17595 / CGMCC 1.15422 / KT0803) (Gramella forsetii).